Reading from the N-terminus, the 201-residue chain is Holliday junction resolvase RecU (201 aa).

Positions 85, 87, 100, and 119 each coordinate Mg(2+).

Belongs to the RecU family. Mg(2+) serves as cofactor.

Its subcellular location is the cytoplasm. The catalysed reaction is Endonucleolytic cleavage at a junction such as a reciprocal single-stranded crossover between two homologous DNA duplexes (Holliday junction).. Its function is as follows. Endonuclease that resolves Holliday junction intermediates in genetic recombination. Cleaves mobile four-strand junctions by introducing symmetrical nicks in paired strands. Promotes annealing of linear ssDNA with homologous dsDNA. Required for DNA repair, homologous recombination and chromosome segregation. In Geobacillus sp. (strain WCH70), this protein is Holliday junction resolvase RecU.